Consider the following 101-residue polypeptide: ATP-dependent Clp protease adapter protein ClpS (101 aa).

Belongs to the ClpS family. Binds to the N-terminal domain of the chaperone ClpA.

Functionally, involved in the modulation of the specificity of the ClpAP-mediated ATP-dependent protein degradation. The sequence is that of ATP-dependent Clp protease adapter protein ClpS from Corynebacterium jeikeium (strain K411).